The primary structure comprises 91 residues: Teretoxin Tan6.2 (91 aa).

An N-terminal signal peptide occupies residues 1–21; it reads MATSGRLLCVCLVLGLVFGSL. The propeptide occupies 22-50; the sequence is GYPVMEKKRAGKNFDLGTIANWAWQIGEK.

Belongs to the teretoxin M (TM) superfamily. In terms of processing, contains 3 disulfide bonds. As to expression, expressed by the venom duct.

Its subcellular location is the secreted. The chain is Teretoxin Tan6.2 from Terebra anilis (Auger snail).